A 357-amino-acid chain; its full sequence is Nitronate monooxygenase npaC (357 aa).

The FMN site is built by Gln167, Gly172, and Gly206.

This sequence belongs to the nitronate monooxygenase family. NMO class I subfamily. The cofactor is FMN.

In terms of biological role, nitronate monooxygenase; part of the gene cluster that mediates the biosynthesis of the deadly neurotoxic nitroalkane 3-nitropropanoic acid (3-NPA) that acts as an antimetabolite of succinate and irreversibly inhibits succinate dehydrogenase and disrupts mitochondrial oxidative phosphorylation. Catalyzes the oxidation of 3-NPA to nitrite and malonic semialdehyde. NpaC is not conserved in all fungal npa clusters and, while it is possible that it serves as a self-protection mechanism against accumulation of 3-NPA (by npaA and npaB) in the producing host, the more likely scenario may be the three enzymes representing an alternative catabolic pathway of aspartate to generate readily metabolizable nitrogen and carbon sources. This chain is Nitronate monooxygenase npaC, found in Metarhizium robertsii (strain ARSEF 23 / ATCC MYA-3075) (Metarhizium anisopliae (strain ARSEF 23)).